Here is a 408-residue protein sequence, read N- to C-terminus: Peptidase T (408 aa).

Position 78 (histidine 78) interacts with Zn(2+). Residue aspartate 80 is part of the active site. Aspartate 140 is a binding site for Zn(2+). The active-site Proton acceptor is the glutamate 173. 3 residues coordinate Zn(2+): glutamate 174, aspartate 196, and histidine 379.

Belongs to the peptidase M20B family. It depends on Zn(2+) as a cofactor.

Its subcellular location is the cytoplasm. It carries out the reaction Release of the N-terminal residue from a tripeptide.. Its function is as follows. Cleaves the N-terminal amino acid of tripeptides. The polypeptide is Peptidase T (Escherichia coli O9:H4 (strain HS)).